The chain runs to 201 residues: Large ribosomal subunit protein bL9 (201 aa).

A compositionally biased stretch (basic and acidic residues) spans 150–165 (EAERQAAGEDLTQRRD). The tract at residues 150–201 (EAERQAAGEDLTQRRDDEEEEAVEAAEFFESEELAPGDEEEEAAGEEEDAKE) is disordered. Residues 166 to 201 (DEEEEAVEAAEFFESEELAPGDEEEEAAGEEEDAKE) are compositionally biased toward acidic residues.

Belongs to the bacterial ribosomal protein bL9 family.

Functionally, binds to the 23S rRNA. The sequence is that of Large ribosomal subunit protein bL9 from Parvibaculum lavamentivorans (strain DS-1 / DSM 13023 / NCIMB 13966).